Consider the following 670-residue polypeptide: Tyramine beta-hydroxylase (670 aa).

Residues 26-35 (HHQLAYHHHK) are compositionally biased toward basic residues. The segment at 26 to 63 (HHQLAYHHHKQEQQQQQQQQQQQQAKQKQKQNGVQQGR) is disordered. Low complexity predominate over residues 38–61 (QQQQQQQQQQQQAKQKQKQNGVQQ). A helical transmembrane segment spans residues 65-81 (PTFMPVMLLLLMATLLT). Residues 104 to 220 (KEIKLSWMVD…GTMYVVWARG (117 aa)) form the DOMON domain. N235 carries an N-linked (GlcNAc...) asparagine glycan. Y281 is a catalytic residue. 2 cysteine pairs are disulfide-bonded: C283–C334 and C319–C344. The Cu(2+) site is built by H312 and H313. Cu(2+) is bound by residues H382, H461, H463, and M536. Cystine bridges form between C439–C552, C443–C613, and C515–C537. H461 is an active-site residue. Residue N614 is glycosylated (N-linked (GlcNAc...) asparagine).

The protein belongs to the copper type II ascorbate-dependent monooxygenase family. Is most likely a monomer under physiological conditions, although under conditions of high pH and low ionic strength the dimeric form predominates. Both forms are equally active. Cu(2+) is required as a cofactor. Present in head and in neurons innervating the oviduct (at protein level).

It is found in the membrane. The catalysed reaction is tyramine + L-ascorbate + O2 = (R)-octopamine + L-dehydroascorbate + H2O. Functionally, catalyzes the hydroxylation of tyramine into octopamine, a neurotransmitter involved in ovulation and locomotion. Functions in an amine-mediated Bacc-dependent signaling pathway that negatively regulates acute ethanol sensitivity. Involved in facilitation of nociceptive escape behavior in response to potentially damaging stimuli, such as high temperatures. This Drosophila melanogaster (Fruit fly) protein is Tyramine beta-hydroxylase (Tbh).